Consider the following 330-residue polypeptide: L-asparaginase (330 aa).

In terms of domain architecture, Asparaginase/glutaminase spans 4–330; it reads PQVTILATGG…EAIQKIFSTY (327 aa). The active-site O-isoaspartyl threonine intermediate is the Thr-14. 93–94 lines the substrate pocket; the sequence is TD.

This sequence belongs to the asparaginase 1 family. As to quaternary structure, homotetramer.

The protein resides in the cytoplasm. It catalyses the reaction L-asparagine + H2O = L-aspartate + NH4(+). The sequence is that of L-asparaginase (ansA) from Wolinella succinogenes (strain ATCC 29543 / DSM 1740 / CCUG 13145 / JCM 31913 / LMG 7466 / NCTC 11488 / FDC 602W) (Vibrio succinogenes).